The primary structure comprises 827 residues: Cadherin-17 (827 aa).

An N-terminal signal peptide occupies residues 1-21 (MVSAQLHFLCLLTLYLTGAYG). Over 22-786 (QEGKFSGPLK…NQVGIPTVGM (765 aa)) the chain is Extracellular. Cadherin domains follow at residues 29–127 (PLKP…TFLQ), 128–243 (TKYE…APEP), 244–339 (VEIR…PPTC), 340–448 (LSQV…IPIF), 449–565 (ERSD…VPVF), 566–666 (PQQI…PPRL), and 667–776 (AKDY…RPAG). N-linked (GlcNAc...) asparagine glycans are attached at residues Asn-148, Asn-183, Asn-249, Asn-418, Asn-545, Asn-573, and Asn-721. The chain crosses the membrane as a helical span at residues 787-807 (AVGILLTTFLVIGIILAVVFI). Residues 808–827 (RMRKDKVEDPQSPENKPLRS) are Cytoplasmic-facing.

In terms of tissue distribution, liver and intestine.

Its subcellular location is the cell membrane. In terms of biological role, cadherins are calcium-dependent cell adhesion proteins. They preferentially interact with themselves in a homophilic manner in connecting cells; cadherins may thus contribute to the sorting of heterogeneous cell types. LI-cadherin may have a role in the morphological organization of liver and intestine. This is Cadherin-17 (Cdh17) from Rattus norvegicus (Rat).